A 287-amino-acid chain; its full sequence is Co-chaperone protein DjlA (287 aa).

The Periplasmic portion of the chain corresponds to 1–6 (MNFIGK). Residues 7-30 (FLGLIIGWKLGGFFGAICGVILGH) form a helical membrane-spanning segment. Residues 31-287 (LGDKKLYELG…DLICKTKGWK (257 aa)) lie on the Cytoplasmic side of the membrane. In terms of domain architecture, J spans 221–287 (DAYKVLGVSA…DLICKTKGWK (67 aa)).

In terms of assembly, homodimer.

It localises to the cell inner membrane. In terms of biological role, regulatory DnaK co-chaperone. Direct interaction between DnaK and DjlA is needed for the induction of the wcaABCDE operon, involved in the synthesis of a colanic acid polysaccharide capsule, possibly through activation of the RcsB/RcsC phosphotransfer signaling pathway. The colanic acid capsule may help the bacterium survive conditions outside the host. The chain is Co-chaperone protein DjlA from Pasteurella multocida (strain Pm70).